Here is a 1203-residue protein sequence, read N- to C-terminus: MPKSGAHQPLVRHDTDDGGETGQSVKSLADVSEEEIDSRMSRRSSVIADLLSLFRRSSSVLVRPHTRLGNPNFDDDDDEFDEEDDKEASKDRILKKIQQKKEIIQKLRGQPWYMKRKRRTLKVAQKHLQQQEAKVSKARLYKAEAGRRLTQASRWLDNLKIYLIPWEAKIRKIESHFGSVVSSYFTFHRWVLGVNITITFIMCMFVVIPEWLADSRTQFGDDRYNKTKAIKVMPPAVRARADELSTVWDFGGYFQYSLLFYGFYSKETFFGETIKYRVPVAYFFCNIFILGFSLFIILRKMAANNRRGTLSSGKTQQYLFNWKAFTGWDYTIGNPETAGNVYMANVIKFREAINDDKQKPSDKHPWIRFVARVLTNLFICAMYVFSIWAIMQCGTLKGEHFFAQNATAITISLITLVFPNIFDLLGKIEKLHPRNALRFQLGRVLVLYILNYYTLIYSLMLQLEHLQKEKNASDNPISALGHPGDAIGRTIRETVLPRYPVDNNPHTYYSYAPVTTTPIPATSSWTTVLPDFGPFGVYNPKASVTKDDTVFSSPVVETHMFGPNSDWNETTVNAASPTGATTRASLRMSQGGLCWETIIGQEITKLVTMDLYMTVASIFLIDFLRGLACRYLNLYWPWDLERTFPEYGEFKVAENVLHLVNNQGMIWLGLFFVPLLPMLNNIKLIILMYIRGWAAMTCNVPASQIFRASRSSNFFFALLILFLFLCTLPVGFVIASKTPSKSCGPFGNQSFFYSVITDVLHENLDKTLVNGIKYSLSPGIIIPVLVLLSLVIYFLIAMVTGLSQANQDLSFQLMVERTEEKKKIFELAGGKKKKSKDNTFGKQKPKQLLPPPTKGVSSDDDSQHNRSTAKSVSGRQFVPSLGSVSEVDHSTGEEQSSDSESTTSSLPPKLSLRQRFLVCIGWADPNKYGRHDDIEMEEGGGRLRELSTGSETDSDDEDSEKSNRDMSYRTAIQSFDQNSQSASASSSKSTTTAPSNSEMRIEITENPLHTYITPLRIEKKSSASSSSSSHQPSSSIEKQAARRLLQPISTTHNIRYGVATVENSSQDPTRPPSTDDSLGDPALHEPLWANLNPHSSYTSAMMSPIMNEVMSNDETTDDEKGRLIPDRPPIPHSPRELKRLKREKDQQSESGSKPSTPRPPRFRISMSPPRKPPSEKNDSDSSNRKYEMRVEKSPKKPKKSDND.

Disordered stretches follow at residues 1 to 39 (MPKSGAHQPLVRHDTDDGGETGQSVKSLADVSEEEIDSR) and 64 to 90 (PHTRLGNPNFDDDDDEFDEEDDKEASK). The span at 73-86 (FDDDDDEFDEEDDK) shows a compositional bias: acidic residues. Residues 191–213 (VLGVNITITFIMCMFVVIPEWLA) traverse the membrane as a helical segment. An N-linked (GlcNAc...) asparagine glycan is attached at N225. Helical transmembrane passes span 276 to 298 (YRVPVAYFFCNIFILGFSLFIIL), 369 to 391 (FVARVLTNLFICAMYVFSIWAIM), 406 to 428 (ATAITISLITLVFPNIFDLLGKI), 441 to 463 (LGRVLVLYILNYYTLIYSLMLQL), 665 to 687 (MIWLGLFFVPLLPMLNNIKLIIL), and 714 to 736 (FFFALLILFLFLCTLPVGFVIAS). A glycan (N-linked (GlcNAc...) asparagine) is linked at N748. A helical membrane pass occupies residues 780–802 (IIIPVLVLLSLVIYFLIAMVTGL). 4 disordered regions span residues 826–908 (ELAG…SLPP), 927–1039 (KYGR…IEKQ), 1059–1087 (ATVENSSQDPTRPPSTDDSLGDPALHEPL), and 1112–1203 (NDET…SDND). A compositionally biased stretch (polar residues) spans 865–874 (NRSTAKSVSG). The segment covering 898 to 908 (DSESTTSSLPP) has biased composition (low complexity). Residues 927–945 (KYGRHDDIEMEEGGGRLRE) show a composition bias toward basic and acidic residues. Low complexity-rich tracts occupy residues 973–997 (QSFDQNSQSASASSSKSTTTAPSNS) and 1022–1035 (SASSSSSSHQPSSS). Residues 1061-1076 (VENSSQDPTRPPSTDD) are compositionally biased toward polar residues. Composition is skewed to basic and acidic residues over residues 1133–1147 (SPRELKRLKREKDQQ) and 1172–1203 (PPSEKNDSDSSNRKYEMRVEKSPKKPKKSDND).

It belongs to the TMC family.

The protein localises to the membrane. Probable ion channel. In Caenorhabditis elegans, this protein is Transmembrane channel-like protein 2 (tmc-2).